A 104-amino-acid polypeptide reads, in one-letter code: UPF0473 protein SH1304 (104 aa).

The protein belongs to the UPF0473 family.

The chain is UPF0473 protein SH1304 from Staphylococcus haemolyticus (strain JCSC1435).